A 380-amino-acid polypeptide reads, in one-letter code: Cytochrome b (380 aa).

Transmembrane regions (helical) follow at residues 33–53, 77–98, 113–133, and 178–198; these read FGSLLGACLIIQITTGLFLAM, WMIRHLHANGASMFFICLFLHI, WNIGIILLFTTMMTAFMGYVL, and FFTLHFMLPFIITALTTLHLL. Residues His-83 and His-97 each contribute to the heme b site. Positions 182 and 196 each coordinate heme b. His-201 is an a ubiquinone binding site. A run of 4 helical transmembrane segments spans residues 226 to 246, 288 to 308, 320 to 340, and 347 to 367; these read IKDILGLLLFLLALMTLTLLS, LGGVMALMLSILILTTIPALH, LSQFLYWLLIADLLILTWIGG, and FITISQVASTLYFTTILLLMP.

This sequence belongs to the cytochrome b family. In terms of assembly, the cytochrome bc1 complex contains 11 subunits: 3 respiratory subunits (MT-CYB, CYC1 and UQCRFS1), 2 core proteins (UQCRC1 and UQCRC2) and 6 low-molecular weight proteins (UQCRH/QCR6, UQCRB/QCR7, UQCRQ/QCR8, UQCR10/QCR9, UQCR11/QCR10 and a cleavage product of UQCRFS1). This cytochrome bc1 complex then forms a dimer. It depends on heme b as a cofactor.

The protein resides in the mitochondrion inner membrane. Its function is as follows. Component of the ubiquinol-cytochrome c reductase complex (complex III or cytochrome b-c1 complex) that is part of the mitochondrial respiratory chain. The b-c1 complex mediates electron transfer from ubiquinol to cytochrome c. Contributes to the generation of a proton gradient across the mitochondrial membrane that is then used for ATP synthesis. This chain is Cytochrome b (MT-CYB), found in Pongo abelii (Sumatran orangutan).